The chain runs to 132 residues: Small ribosomal subunit protein uS8 (132 aa).

Belongs to the universal ribosomal protein uS8 family. As to quaternary structure, part of the 30S ribosomal subunit. Contacts proteins S5 and S12.

Functionally, one of the primary rRNA binding proteins, it binds directly to 16S rRNA central domain where it helps coordinate assembly of the platform of the 30S subunit. This chain is Small ribosomal subunit protein uS8, found in Bacillus anthracis (strain A0248).